The primary structure comprises 307 residues: Taste receptor type 2 member 106 (307 aa).

Topologically, residues 1 to 7 are extracellular; the sequence is MLTIPEG. Residues 8-28 form a helical membrane-spanning segment; that stretch reads ILLCFITSGSVLGVLGNGFIL. Residues 29–41 lie on the Cytoplasmic side of the membrane; the sequence is HVNCTDCVRQKFS. The chain crosses the membrane as a helical span at residues 42 to 62; the sequence is TTGFIFTGLAISRICVICIII. Over 63–81 the chain is Extracellular; sequence SDGYLKLFSPHMVASDAHI. The helical transmembrane segment at 82 to 104 threads the bilayer; it reads IGISYLWIITNHTSTCFATILNL. Over 105 to 124 the chain is Cytoplasmic; the sequence is FYFLKIANFSHYIFFCLKRK. A helical membrane pass occupies residues 125-145; the sequence is LNTIFIFLLGCLFISWSVAFP. The Extracellular segment spans residues 146–179; that stretch reads QTVKIFNDKMKHRNTSWKFHLHKSKFIINHILLN. Residue N159 is glycosylated (N-linked (GlcNAc...) asparagine). A helical transmembrane segment spans residues 180–200; the sequence is LGVIFFCMVAIITSFLLIISL. At 201–227 the chain is on the cytoplasmic side; that stretch reads WKHNRKMQLYVSRFKSLNTEVHLKVMK. Residues 228-248 form a helical membrane-spanning segment; it reads VLISFIILLILHVIGILIETL. Residues 249-257 lie on the Extracellular side of the membrane; the sequence is SFLRYENKL. A helical membrane pass occupies residues 258 to 278; sequence LLILGLNFSSMYPCCHSFILI. The Cytoplasmic portion of the chain corresponds to 279 to 307; the sequence is LANNQLKQASLKALKQFKCHKKDKDVRET.

This sequence belongs to the G-protein coupled receptor T2R family.

It localises to the membrane. In terms of biological role, putative taste receptor which may play a role in the perception of bitterness. The chain is Taste receptor type 2 member 106 from Rattus norvegicus (Rat).